Consider the following 328-residue polypeptide: Malate dehydrogenase (328 aa).

Position 12 to 18 (12 to 18 (GAAGQIG)) interacts with NAD(+). Arg95 and Arg101 together coordinate substrate. Residues Asn108, Gln115, and 132-134 (VGN) each bind NAD(+). Substrate is bound by residues Asn134 and Arg165. His190 serves as the catalytic Proton acceptor.

It belongs to the LDH/MDH superfamily. MDH type 2 family.

It catalyses the reaction (S)-malate + NAD(+) = oxaloacetate + NADH + H(+). Its function is as follows. Catalyzes the reversible oxidation of malate to oxaloacetate. This Polaromonas naphthalenivorans (strain CJ2) protein is Malate dehydrogenase.